A 767-amino-acid chain; its full sequence is V-set and immunoglobulin domain-containing protein 10-like 2 (767 aa).

Positions 1-28 (MVGQRAQHSPVSLLLLIHLCLLHLRASG) are cleaved as a signal peptide. 3 Ig-like domains span residues 34–140 (PEAP…SHLT), 150–234 (PQVR…AFLD), and 242–324 (PVIT…TTVQ). Disulfide bonds link Cys-56–Cys-122, Cys-169–Cys-217, and Cys-268–Cys-308. Asn-376 is a glycosylation site (N-linked (GlcNAc...) asparagine). 2 Ig-like domains span residues 399-499 (PALA…LQLE) and 501-593 (PQLD…VLLE). Intrachain disulfides connect Cys-435–Cys-481 and Cys-522–Cys-577. The region spanning 599-699 (APPNVTISRL…EVKIPADPPF (101 aa)) is the Fibronectin type-III domain. N-linked (GlcNAc...) asparagine glycans are attached at residues Asn-602 and Asn-628. Residues 704-724 (AVLGAAGTGMVVATVASLLVF) form a helical membrane-spanning segment. The tract at residues 735-754 (PRLETPTTTPGLDPAQETTD) is disordered. Residues 739–754 (TPTTTPGLDPAQETTD) are compositionally biased toward polar residues.

It localises to the membrane. This Homo sapiens (Human) protein is V-set and immunoglobulin domain-containing protein 10-like 2.